The chain runs to 470 residues: 6-phosphofructo-2-kinase/fructose-2,6-bisphosphatase (470 aa).

Positions 1–249 (MADRLRELTQ…VYYLMNIHVT (249 aa)) are 6-phosphofructo-2-kinase. Serine 31 carries the phosphoserine; by PKA modification. 47-55 (GLPARGKTY) lines the ATP pocket. Residues arginine 80 and arginine 104 each contribute to the beta-D-fructose 6-phosphate site. Aspartate 130 is an active-site residue. Residues threonine 132 and arginine 138 each contribute to the beta-D-fructose 6-phosphate site. Cysteine 160 is a catalytic residue. 169–174 (NITQVK) provides a ligand contact to ATP. Beta-D-fructose 6-phosphate-binding residues include lysine 174, arginine 195, and tyrosine 199. A fructose-2,6-bisphosphatase region spans residues 250-470 (PRSIYLSRHG…EALDTVPEHF (221 aa)). Arginine 257 lines the beta-D-fructose 2,6-bisphosphate pocket. The active-site Tele-phosphohistidine intermediate is the histidine 258. Residues asparagine 264 and glycine 270 each contribute to the beta-D-fructose 2,6-bisphosphate site. The Proton donor/acceptor role is filled by glutamate 327. Residues tyrosine 338, arginine 352, lysine 356, tyrosine 367, glutamine 393, and arginine 397 each contribute to the beta-D-fructose 2,6-bisphosphate site. ATP is bound at residue 349–352 (FALR). Residues 393–397 (QAVMR) and tyrosine 429 each bind ATP.

It in the C-terminal section; belongs to the phosphoglycerate mutase family. As to quaternary structure, homodimer.

It catalyses the reaction beta-D-fructose 2,6-bisphosphate + H2O = beta-D-fructose 6-phosphate + phosphate. The catalysed reaction is beta-D-fructose 6-phosphate + ATP = beta-D-fructose 2,6-bisphosphate + ADP + H(+). Phosphorylation results in inhibition of the kinase activity. Synthesis and degradation of fructose 2,6-bisphosphate. The protein is 6-phosphofructo-2-kinase/fructose-2,6-bisphosphatase of Aquarana catesbeiana (American bullfrog).